We begin with the raw amino-acid sequence, 79 residues long: Large ribosomal subunit protein uL24 (79 aa).

This sequence belongs to the universal ribosomal protein uL24 family. Part of the 50S ribosomal subunit.

Its function is as follows. One of two assembly initiator proteins, it binds directly to the 5'-end of the 23S rRNA, where it nucleates assembly of the 50S subunit. Functionally, one of the proteins that surrounds the polypeptide exit tunnel on the outside of the subunit. The polypeptide is Large ribosomal subunit protein uL24 (Lactobacillus delbrueckii subsp. bulgaricus (strain ATCC 11842 / DSM 20081 / BCRC 10696 / JCM 1002 / NBRC 13953 / NCIMB 11778 / NCTC 12712 / WDCM 00102 / Lb 14)).